The following is a 246-amino-acid chain: Phosphonates import ATP-binding protein PhnC (246 aa).

Residues 2–246 (IKFENVSKIY…ILDEVYRKEA (245 aa)) enclose the ABC transporter domain. 35-42 (GTSGAGKS) serves as a coordination point for ATP.

This sequence belongs to the ABC transporter superfamily. Phosphonates importer (TC 3.A.1.9.1) family. In terms of assembly, the complex is composed of two ATP-binding proteins (PhnC), two transmembrane proteins (PhnE) and a solute-binding protein (PhnD).

It localises to the cell membrane. It catalyses the reaction phosphonate(out) + ATP + H2O = phosphonate(in) + ADP + phosphate + H(+). Part of the ABC transporter complex PhnCDE involved in phosphonates import. Responsible for energy coupling to the transport system. The polypeptide is Phosphonates import ATP-binding protein PhnC (Lactococcus lactis subsp. lactis (strain IL1403) (Streptococcus lactis)).